The sequence spans 689 residues: Glycine--tRNA ligase beta subunit (689 aa).

It belongs to the class-II aminoacyl-tRNA synthetase family. In terms of assembly, tetramer of two alpha and two beta subunits.

It is found in the cytoplasm. The catalysed reaction is tRNA(Gly) + glycine + ATP = glycyl-tRNA(Gly) + AMP + diphosphate. This is Glycine--tRNA ligase beta subunit from Lacticaseibacillus casei (strain BL23) (Lactobacillus casei).